The following is a 152-amino-acid chain: Large ribosomal subunit protein bL9 (152 aa).

Belongs to the bacterial ribosomal protein bL9 family.

Its function is as follows. Binds to the 23S rRNA. The chain is Large ribosomal subunit protein bL9 from Saccharophagus degradans (strain 2-40 / ATCC 43961 / DSM 17024).